A 570-amino-acid chain; its full sequence is MPGETEEPRPPEQQDQEGGEAAKAAPEEPQQRPPEAVAAAPAGTTSSRVLRGGRDRGRAAAAAAAAAVSRRRKAEYPRRRRSSPSARPPDVPGQQPQAAKSPSPVQGKKSPRLLCIEKVTTDKDPKEEKEEEDDSALPQEVSIAASRPSRGWRSSRTSVSRHRDTENTRSSRSKTGSLQLICKSEPNTDQLDYDVGEEHQSPGGISSEEEEEEEEEMLISEEEIPFKDDPRDETYKPHLERETPKPRRKSGKVKEEKEKKEIKVEVEVEVKEEENEIREDEEPPRKRGRRRKDDKSPRLPKRRKKPPIQYVRCEMEGCGTVLAHPRYLQHHIKYQHLLKKKYVCPHPSCGRLFRLQKQLLRHAKHHTDQRDYICEYCARAFKSSHNLAVHRMIHTGEKPLQCEICGFTCRQKASLNWHMKKHDADSFYQFSCNICGKKFEKKDSVVAHKAKSHPEVLIAEALAANAGALITSTDILGTNPESLTQPSDGQGLPLLPEPLGNSTSGECLLLEAEGMSKSYCSGTERVSLMADGKIFVGSGSSGGTEGLVMNSDILGATTEVLIEDSDSAGP.

The segment covering 1–12 (MPGETEEPRPPE) has biased composition (basic and acidic residues). Positions 1–306 (MPGETEEPRP…PRLPKRRKKP (306 aa)) are disordered. Composition is skewed to low complexity over residues 31–43 (QRPP…APAG) and 59–68 (AAAAAAAAAV). Residues 69–82 (SRRRKAEYPRRRRS) show a composition bias toward basic residues. Residues Ser-83 and Ser-103 each carry the phosphoserine modification. Over residues 94–104 (QQPQAAKSPSP) the composition is skewed to polar residues. The segment covering 119-128 (VTTDKDPKEE) has biased composition (basic and acidic residues). Residues 207-223 (SEEEEEEEEEMLISEEE) are compositionally biased toward acidic residues. 2 stretches are compositionally biased toward basic and acidic residues: residues 224–245 (IPFK…ETPK) and 252–269 (KVKE…VEVE). Positions 270-282 (VKEEENEIREDEE) are enriched in acidic residues. 5 consecutive C2H2-type zinc fingers follow at residues 311–336 (VRCE…KYQH), 342–366 (YVCP…AKHH), 372–394 (YICE…RMIH), 400–422 (LQCE…MKKH), and 430–453 (FSCN…AKSH). Residues 338–368 (LKKKYVCPHPSCGRLFRLQKQLLRHAKHHTD) are interaction with MAP3K14/NIK.

It belongs to the krueppel C2H2-type zinc-finger protein family. Interacts with MAP3K14/NIK. As to expression, expressed ubiquitously, particularly at high level in testis. Isoform 2 is testis specific.

It localises to the nucleus. It catalyses the reaction S-ubiquitinyl-[E2 ubiquitin-conjugating enzyme]-L-cysteine + [acceptor protein]-L-lysine = [E2 ubiquitin-conjugating enzyme]-L-cysteine + N(6)-ubiquitinyl-[acceptor protein]-L-lysine.. It functions in the pathway protein modification; protein ubiquitination. Atypical E3 ubiquitin-protein ligase that mediates 'Lys-63'-linked ubiquitination of MAP3K14/NIK, leading to stabilize and activate MAP3K14/NIK. It thereby acts as an activator of the non-canonical NF-kappa-B2/NFKB2 pathway. May also play an important role in cell proliferation and/or anti-apoptosis. This is E3 ubiquitin-protein ligase ZFP91 (ZFP91) from Homo sapiens (Human).